Consider the following 174-residue polypeptide: Regenerating islet-derived protein 3-alpha (174 aa).

The signal sequence occupies residues 1 to 25; it reads MLPRLSFNNVSWTLLYYLFIFQVRG. Residues 26–36 constitute a propeptide that is removed on maturation; it reads EDSQKAVPSTR. 3 disulfides stabilise this stretch: Cys-39–Cys-50, Cys-67–Cys-170, and Cys-145–Cys-162. The C-type lectin domain maps to 46 to 171; the sequence is YRSYCYTLVT…CDVELPFVCK (126 aa). The interval 102 to 117 is sufficient to activate EXTL3; it reads WIWLHDPTMGQQPNGG. Positions 106 and 120 each coordinate Zn(2+).

As to quaternary structure, forms a hexameric membrane-permeabilizing oligomeric pore on membrane phospholipids. The hexamer is formed by three dimers related by helical symmetry. Forms filaments, filamentation traps pore complexes and limits damage to host cells. Interacts with EXTL3. Proteolytic processing by trypsin removes an inhibitory N-terminal propeptide and is essential for peptidoglycan binding and antibacterial activity. Low expression found in healthy pancreas.

The protein localises to the secreted. Its function is as follows. Bactericidal C-type lectin. The lack of the EPN motif may explain its inability to bind peptidoglycan. Functionally, acts as a hormone in response to different stimuli like anti-inflammatory signals, such as IL17A, or gut microbiome. Secreted by different cell types to activate its receptor EXTL3 and induce cell specific signaling pathways. Induced by IL17A in keratinocytes, regulates keratinocyte proliferation and differentiation after skin injury via activation of EXTL3-PI3K-AKT signaling pathway. In parallel, inhibits skin inflammation through the inhibition of inflammatory cytokines such as IL6 and TNF. In pancreas, is able to permealize beta-cells membrane and stimulate their proliferation. This chain is Regenerating islet-derived protein 3-alpha (Reg3a), found in Rattus norvegicus (Rat).